The primary structure comprises 499 residues: Glycerol kinase (499 aa).

Thr13 is a binding site for ADP. ATP contacts are provided by Thr13, Thr14, and Ser15. Thr13 lines the sn-glycerol 3-phosphate pocket. Arg17 serves as a coordination point for ADP. Sn-glycerol 3-phosphate is bound by residues Arg83, Glu84, Tyr135, and Asp244. Glycerol-binding residues include Arg83, Glu84, Tyr135, Asp244, and Gln245. Thr266 and Gly309 together coordinate ADP. ATP-binding residues include Thr266, Gly309, Gln313, and Gly410. ADP is bound by residues Gly410 and Asn414.

It belongs to the FGGY kinase family.

It catalyses the reaction glycerol + ATP = sn-glycerol 3-phosphate + ADP + H(+). It participates in polyol metabolism; glycerol degradation via glycerol kinase pathway; sn-glycerol 3-phosphate from glycerol: step 1/1. With respect to regulation, inhibited by fructose 1,6-bisphosphate (FBP). Key enzyme in the regulation of glycerol uptake and metabolism. Catalyzes the phosphorylation of glycerol to yield sn-glycerol 3-phosphate. The chain is Glycerol kinase from Paraburkholderia phymatum (strain DSM 17167 / CIP 108236 / LMG 21445 / STM815) (Burkholderia phymatum).